A 407-amino-acid chain; its full sequence is Phosphopentomutase (407 aa).

Asp-10, Asp-306, His-311, Asp-347, His-348, and His-359 together coordinate Mn(2+).

This sequence belongs to the phosphopentomutase family. Mn(2+) serves as cofactor.

The protein localises to the cytoplasm. The enzyme catalyses 2-deoxy-alpha-D-ribose 1-phosphate = 2-deoxy-D-ribose 5-phosphate. It catalyses the reaction alpha-D-ribose 1-phosphate = D-ribose 5-phosphate. The protein operates within carbohydrate degradation; 2-deoxy-D-ribose 1-phosphate degradation; D-glyceraldehyde 3-phosphate and acetaldehyde from 2-deoxy-alpha-D-ribose 1-phosphate: step 1/2. Isomerase that catalyzes the conversion of deoxy-ribose 1-phosphate (dRib-1-P) and ribose 1-phosphate (Rib-1-P) to deoxy-ribose 5-phosphate (dRib-5-P) and ribose 5-phosphate (Rib-5-P), respectively. The sequence is that of Phosphopentomutase from Yersinia pseudotuberculosis serotype O:1b (strain IP 31758).